Here is a 535-residue protein sequence, read N- to C-terminus: MFSWLGTDDRRRKDPEVFQTVSEGLKKLYKSKLLPLEEHYRFHEFHSPALEDADFDNKPMVLLVGQYSTGKTTFIRYLLEQDFPGMRIGPEPTTDSFIAVMQGDMEGIIPGNALVVDPKKPFRKLNAFGNAFLNRFVCAQLPNPVLESISVIDTPGILSGEKQRISRGYDFAAVLEWFAERVDRIILLFDAHKLDISDEFSEVIKALKNHEDKMRVVLNKADQIETQQLMRVYGALMWSLGKIVNTPEVIRVYIGSFWSHPLLIPDNRKLFEAEEQDLFRDIQSLPRNAALRKLNDLIKRARLAKVHAYIISSLKKEMPSVFGKDNKKKELVNNLAEIYGRIEREHQISPGDFPNLKRMQDQLQAQDFSKFQPLKSKLLEVVDDMLAHDIAQLMVLVRQEESQRPIQMVKGGAFEGTLHGPFGHGYGEGAGEGIDDAEWVVARDKPMYDEIFYTLSPVDGKITGANAKKEMVRSKLPNSVLGKIWKLADIDKDGMLDDDEFALANHLIKVKLEGHELPNELPAHLLPPSKRKVAE.

An N-acetylmethionine modification is found at Met-1. The Dynamin-type G domain maps to 55-286; sequence FDNKPMVLLV…DLFRDIQSLP (232 aa). Positions 65-72 are G1 motif; sequence GQYSTGKT. 65–72 provides a ligand contact to ATP; the sequence is GQYSTGKT. The tract at residues 91-92 is G2 motif; sequence EP. Positions 153–156 are G3 motif; the sequence is DTPG. Residues 198-227 are a coiled coil; sequence DEFSEVIKALKNHEDKMRVVLNKADQIETQ. The segment at 219-222 is G4 motif; it reads NKAD. Lys-220 is a binding site for ATP. Position 243 (Ile-243) is a region of interest, G5 motif. ATP is bound at residue Trp-258. Lys-315 is covalently cross-linked (Glycyl lysine isopeptide (Lys-Gly) (interchain with G-Cter in SUMO)). Phosphoserine is present on residues Ser-349 and Ser-456. Residues 444–532 form the EH domain; sequence DKPMYDEIFY…AHLLPPSKRK (89 aa). In terms of domain architecture, EF-hand spans 476–511; it reads LPNSVLGKIWKLADIDKDGMLDDDEFALANHLIKVK. Positions 489, 491, 493, 495, and 500 each coordinate Ca(2+). Lys-511 is covalently cross-linked (Glycyl lysine isopeptide (Lys-Gly) (interchain with G-Cter in SUMO)).

The protein belongs to the TRAFAC class dynamin-like GTPase superfamily. Dynamin/Fzo/YdjA family. EHD subfamily. As to quaternary structure, homooligomer, and heterooligomer with EHD1, EHD2 and EHD4, ATP-binding is required for heterooligomerization. Interacts with PACSIN1. Interacts with PACSIN2. Interacts (via EH domain) with MICALL1. Interacts (via EH domain) with RAB11FIP2. Interacts with ANK2. Highly expressed in heart and brain and moderately expressed in kidney, liver, and placenta.

It localises to the recycling endosome membrane. The protein localises to the cell membrane. It is found in the cell projection. Its subcellular location is the cilium membrane. ATP- and membrane-binding protein that controls membrane reorganization/tubulation upon ATP hydrolysis. In vitro causes tubulation of endocytic membranes. Binding to phosphatidic acid induces its membrane tubulation activity. Plays a role in endocytic transport. Involved in early endosome to recycling endosome compartment (ERC), retrograde early endosome to Golgi, and endosome to plasma membrane (rapid recycling) protein transport. Involved in the regulation of Golgi maintenance and morphology. Involved in the recycling of internalized D1 dopamine receptor. Plays a role in cardiac protein trafficking probably implicating ANK2. Involved in the ventricular membrane targeting of SLC8A1 and CACNA1C and probably the atrial membrane localization of CACNA1GG and CACNA1H implicated in the regulation of atrial myocyte excitability and cardiac conduction. In conjunction with EHD4 may be involved in endocytic trafficking of KDR/VEGFR2 implicated in control of glomerular function. Involved in the rapid recycling of integrin beta-3 implicated in cell adhesion maintenance. Involved in the unidirectional retrograde dendritic transport of endocytosed BACE1 and in efficient sorting of BACE1 to axons implicating a function in neuronal APP processing. Plays a role in the formation of the ciliary vesicle, an early step in cilium biogenesis; possibly sharing redundant functions with EHD1. This is EH domain-containing protein 3 from Homo sapiens (Human).